The following is a 485-amino-acid chain: Probable trichothecene esterase SAT6 (485 aa).

The interval 1–23 (MPQDPNTTLQMSSSKPSLSDLSV) is disordered. The segment covering 9-23 (LQMSSSKPSLSDLSV) has biased composition (low complexity). Active-site charge relay system residues include Ser-262, Asp-406, and His-438.

Belongs to the AB hydrolase superfamily. Lipase family.

The protein operates within mycotoxin biosynthesis. Probable trichothecene esterase; part of the satratoxin SC1 cluster involved in the biosynthesis of satratoxins, trichothecene mycotoxins that are associated with human food poisonings. Satratoxins are suggested to be made by products of multiple gene clusters (SC1, SC2 and SC3) that encode 21 proteins in all, including polyketide synthases, acetyltransferases, and other enzymes expected to modify the trichothecene skeleton. SC1 encodes 10 proteins, SAT1 to SAT10. The largest are SAT8, which encodes a putative polyketide synthase (PKS) with a conventional non-reducing architecture, and SAT10, a putative protein containing four ankyrin repeats and thus may be involved in protein scaffolding. The putative short-chain reductase SAT3 may assist the PKS in some capacity. SAT6 contains a secretory lipase domain and acts probably as a trichothecene esterase. SAT5 encodes a putative acetyltransferase, and so, with SAT6, may affect endogenous protection from toxicity. The probable transcription factor SAT9 may regulate the expression of the SC1 cluster. SC2 encodes proteins SAT11 to SAT16, the largest of which encodes the putative reducing PKS SAT13. SAT11 is a cytochrome P450 monooxygenase, while SAT14 and SAT16 are probable acetyltransferases. The SC2 cluster may be regulated by the transcription factor SAT15. SC3 is a small cluster that encodes 5 proteins, SAT17 to SAT21. SAT21 is a putative MFS-type transporter which may have a role in exporting secondary metabolites. The four other proteins putatively encoded in SC3 include the taurine hydroxylase-like protein SAT17, the O-methyltransferase SAT18, the acetyltransferase SAT19, and the Cys6-type zinc finger SAT20, the latter being probably involved in regulation of SC3 expression. The chain is Probable trichothecene esterase SAT6 from Stachybotrys chartarum (strain CBS 109288 / IBT 7711) (Toxic black mold).